The sequence spans 211 residues: Thymidylate kinase (211 aa).

10–17 (GLDGSGKT) is a binding site for ATP.

Belongs to the thymidylate kinase family.

It catalyses the reaction dTMP + ATP = dTDP + ADP. Its function is as follows. Phosphorylation of dTMP to form dTDP in both de novo and salvage pathways of dTTP synthesis. This Blochmanniella floridana protein is Thymidylate kinase.